Here is an 86-residue protein sequence, read N- to C-terminus: High affinity immunoglobulin epsilon receptor subunit gamma (86 aa).

Positions 1–18 (MIPAVILFLLLLVEEAAA) are cleaved as a signal peptide. At 19–23 (LGEPQ) the chain is on the extracellular side. A helical transmembrane segment spans residues 24-44 (LCYILDAILFLYGIVLTLLYC). The Cytoplasmic portion of the chain corresponds to 45–86 (RLKIQVRKADIASREKSDAVYTGLNTRNQETYETLKHEKPPQ). Residues 54–82 (DIASREKSDAVYTGLNTRNQETYETLKHE) enclose the ITAM domain. Tyr-65 and Tyr-76 each carry phosphotyrosine. Thr-78 carries the phosphothreonine modification.

Belongs to the CD3Z/FCER1G family. IgE Fc receptor is a tetramer of an alpha chain, a beta chain, and two disulfide linked gamma chains. Associates with FCGR1A to form a functional receptor complex. The signaling subunit of immunoglobulin gamma (IgG) Fc receptor complex. As a homodimer or a heterodimer of CD247 and FCER1G, associates with the ligand binding subunit FCGR3A to form a functional receptor complex. Associates with CLEC6A. Interacts with CLEC4E. Interacts (via ITAM domain) with SYK (via SH2 domains); activates SYK, enabling integrin-mediated activation of neutrophils and macrophages. Interacts with common beta chain of interleukin 3 receptor CSF2RB and recruits SYK in response to IL3 stimulation; this interaction is direct. Interacts with CD300LH; the interaction may be indirect. Interacts with CD300LD. Interacts with TARM1. As to expression, expressed in leukocytes and pinealocytes. Expression in the pineal gland does not undergo circadian variations.

Its subcellular location is the cell membrane. Adapter protein containing an immunoreceptor tyrosine-based activation motif (ITAM) that transduces activation signals from various immunoreceptors. As a component of the high-affinity immunoglobulin E (IgE) receptor, mediates allergic inflammatory signaling in mast cells. As a constitutive component of interleukin-3 receptor complex, selectively mediates interleukin 4/IL4 production by basophils priming T-cells toward effector T-helper 2 subset. Associates with pattern recognition receptors CLEC4D and CLEC4E to form a functional signaling complex in myeloid cells. Binding of mycobacterial trehalose 6,6'-dimycolate (TDM) to this receptor complex leads to phosphorylation of ITAM, triggering activation of SYK, CARD9 and NF-kappa-B, consequently driving maturation of antigen-presenting cells and shaping antigen-specific priming of T-cells toward effector T-helper 1 and T-helper 17 cell subtypes. May function cooperatively with other activating receptors. Functionally linked to integrin beta-2/ITGB2-mediated neutrophil activation. Also involved in integrin alpha-2/ITGA2-mediated platelet activation. This Rattus norvegicus (Rat) protein is High affinity immunoglobulin epsilon receptor subunit gamma (Fcer1g).